Here is a 252-residue protein sequence, read N- to C-terminus: Ubiquinone biosynthesis O-methyltransferase (252 aa).

Residues arginine 45, glycine 76, aspartate 97, and methionine 141 each coordinate S-adenosyl-L-methionine.

The protein belongs to the methyltransferase superfamily. UbiG/COQ3 family.

The catalysed reaction is a 3-demethylubiquinol + S-adenosyl-L-methionine = a ubiquinol + S-adenosyl-L-homocysteine + H(+). It catalyses the reaction a 3-(all-trans-polyprenyl)benzene-1,2-diol + S-adenosyl-L-methionine = a 2-methoxy-6-(all-trans-polyprenyl)phenol + S-adenosyl-L-homocysteine + H(+). Its pathway is cofactor biosynthesis; ubiquinone biosynthesis. Functionally, O-methyltransferase that catalyzes the 2 O-methylation steps in the ubiquinone biosynthetic pathway. The sequence is that of Ubiquinone biosynthesis O-methyltransferase from Caulobacter vibrioides (strain ATCC 19089 / CIP 103742 / CB 15) (Caulobacter crescentus).